A 92-amino-acid polypeptide reads, in one-letter code: Small ribosomal subunit protein uS19c (92 aa).

It belongs to the universal ribosomal protein uS19 family.

It is found in the plastid. In terms of biological role, protein S19 forms a complex with S13 that binds strongly to the 16S ribosomal RNA. This is Small ribosomal subunit protein uS19c from Cuscuta exaltata (Tall dodder).